The sequence spans 35 residues: uncharacterized protein (35 aa).

This is an uncharacterized protein from Haemophilus influenzae (strain ATCC 51907 / DSM 11121 / KW20 / Rd).